Here is a 149-residue protein sequence, read N- to C-terminus: D-aminoacyl-tRNA deacylase (149 aa).

A Gly-cisPro motif, important for rejection of L-amino acids motif is present at residues 137–138 (GP).

The protein belongs to the DTD family. In terms of assembly, homodimer.

It is found in the cytoplasm. It catalyses the reaction glycyl-tRNA(Ala) + H2O = tRNA(Ala) + glycine + H(+). The enzyme catalyses a D-aminoacyl-tRNA + H2O = a tRNA + a D-alpha-amino acid + H(+). An aminoacyl-tRNA editing enzyme that deacylates mischarged D-aminoacyl-tRNAs. Also deacylates mischarged glycyl-tRNA(Ala), protecting cells against glycine mischarging by AlaRS. Acts via tRNA-based rather than protein-based catalysis; rejects L-amino acids rather than detecting D-amino acids in the active site. By recycling D-aminoacyl-tRNA to D-amino acids and free tRNA molecules, this enzyme counteracts the toxicity associated with the formation of D-aminoacyl-tRNA entities in vivo and helps enforce protein L-homochirality. In Fervidobacterium nodosum (strain ATCC 35602 / DSM 5306 / Rt17-B1), this protein is D-aminoacyl-tRNA deacylase.